We begin with the raw amino-acid sequence, 140 residues long: Tumor protein D55 (140 aa).

Positions 1-28 (MPHARTETSVGTYESHSTSELEDLTEPE) are disordered. Positions 7–18 (ETSVGTYESHST) are enriched in polar residues. A coiled-coil region spans residues 28–57 (EQRELKTKLTKLEAEIVTLRHVLAAKERRC).

Belongs to the TPD52 family. In terms of assembly, interacts with TPD52L2. Specifically expressed in testis. Expressed at 5.6-fold higher levels in adult testis than in fetal testis.

In Homo sapiens (Human), this protein is Tumor protein D55 (TPD52L3).